Here is a 95-residue protein sequence, read N- to C-terminus: Small ribosomal subunit protein bS6 (95 aa).

Belongs to the bacterial ribosomal protein bS6 family.

Its function is as follows. Binds together with bS18 to 16S ribosomal RNA. In Bacillus cytotoxicus (strain DSM 22905 / CIP 110041 / 391-98 / NVH 391-98), this protein is Small ribosomal subunit protein bS6.